A 283-amino-acid polypeptide reads, in one-letter code: 2-heptyl-4(1H)-quinolone synthase subunit PqsB (283 aa).

It belongs to the thiolase-like superfamily. FabH family. As to quaternary structure, forms a tight complex with PqsC.

It is found in the cytoplasm. Activity of the complex is inhibited by 2-aminoacetophenone (2-AA). Its function is as follows. Required for the biosynthesis of the quorum-sensing signaling molecules 2-heptyl-4(1H)-quinolone (HHQ) and 2-heptyl-3-hydroxy-4(1H)-quinolone (Pseudomonas quinolone signal or PQS), which are important for biofilm formation and virulence. The PqsC/PqsB complex catalyzes the condensation of 2-aminobenzoylacetate (2-ABA) and octanoyl-CoA to form HHQ. PqsB, together with PqsC, catalyzes the coupling of 2-ABA with the octanoate group, leading to decarboxylation and dehydration, and resulting in closure of the quinoline ring. PqsB is probably required for the proper folding of PqsC rather than for a direct enzymatic role in the process. This is 2-heptyl-4(1H)-quinolone synthase subunit PqsB from Pseudomonas aeruginosa (strain ATCC 15692 / DSM 22644 / CIP 104116 / JCM 14847 / LMG 12228 / 1C / PRS 101 / PAO1).